A 135-amino-acid polypeptide reads, in one-letter code: Large ribosomal subunit protein bL17 (135 aa).

The protein belongs to the bacterial ribosomal protein bL17 family. As to quaternary structure, part of the 50S ribosomal subunit. Contacts protein L32.

This chain is Large ribosomal subunit protein bL17, found in Listeria monocytogenes serotype 4b (strain CLIP80459).